The chain runs to 695 residues: Threonine--tRNA ligase 1, cytoplasmic (695 aa).

Residues 1–21 (MSEEKASSPSGKMDGEKPLNP) are disordered. A TGS domain is found at 51 to 115 (DSKPIKVTLP…ETDCTLELLK (65 aa)). Lys215 is subject to N6-acetyllysine. At Thr218 the chain carries Phosphothreonine. Tyr270 is modified (phosphotyrosine). Position 425 is a phosphothreonine (Thr425).

This sequence belongs to the class-II aminoacyl-tRNA synthetase family. Homodimer. Post-translationally, ISGylated.

It localises to the cytoplasm. The enzyme catalyses tRNA(Thr) + L-threonine + ATP = L-threonyl-tRNA(Thr) + AMP + diphosphate + H(+). Functionally, catalyzes the attachment of threonine to tRNA(Thr) in a two-step reaction: threonine is first activated by ATP to form Thr-AMP and then transferred to the acceptor end of tRNA(Thr). Also edits incorrectly charged tRNA(Thr) via its editing domain, at the post-transfer stage. The sequence is that of Threonine--tRNA ligase 1, cytoplasmic (Tars1) from Rattus norvegicus (Rat).